A 594-amino-acid polypeptide reads, in one-letter code: Capsid vertex component 1 (594 aa).

Disordered regions lie at residues 52 to 77 (GRST…DAVG), 176 to 205 (NKRD…NGSD), 443 to 468 (ARRQ…SGPP), and 575 to 594 (GRQE…FDDL). Over residues 61 to 76 (GDEDDAPASDDAEDAV) the composition is skewed to acidic residues.

It belongs to the herpesviridae CVC1 protein family. Interacts (via C-terminus) with capsid vertex component 2/CVC2.

It localises to the virion. Its subcellular location is the host nucleus. Its function is as follows. Capsid vertex-specific component that plays a role during viral DNA encapsidation, assuring correct genome cleavage and presumably stabilizing capsids that contain full-length viral genomes. In Homo sapiens (Human), this protein is Capsid vertex component 1.